A 214-amino-acid polypeptide reads, in one-letter code: Thioredoxin-like 4, chloroplastic (214 aa).

Low complexity predominate over residues 1–20 (MITASLLPLPATSSSSGRRS). Residues 1-68 (MITASLLPLP…STNGSLPGLP (68 aa)) form a disordered region. Residues 1-71 (MITASLLPLP…GSLPGLPPVV (71 aa)) constitute a chloroplast transit peptide. Over residues 21 to 34 (LPPPTTTFPRPPPP) the composition is skewed to pro residues. Residues 42–53 (SSSSSSASSTES) show a composition bias toward low complexity. The Thioredoxin domain maps to 72–199 (VEEEEEEFCP…IIAAIQKYTA (128 aa)). Residues Cys117 and Cys120 each act as nucleophile in the active site. A disulfide bridge links Cys117 with Cys120.

Belongs to the thioredoxin family.

The protein localises to the plastid. It localises to the chloroplast. In terms of biological role, probable thiol-disulfide oxidoreductase that may participate in various redox reactions. This Oryza sativa subsp. japonica (Rice) protein is Thioredoxin-like 4, chloroplastic.